Reading from the N-terminus, the 117-residue chain is G antigen 12J (117 aa).

A disordered region spans residues Met1 to Cys117. Composition is skewed to acidic residues over residues Phe32–Glu45 and Glu87–Glu96. A compositionally biased stretch (basic and acidic residues) spans Glu103–Cys117.

It belongs to the GAGE family.

The protein is G antigen 12J (GAGE12J) of Homo sapiens (Human).